The sequence spans 403 residues: Probable tRNA sulfurtransferase (403 aa).

Residues 60-165 (QLAEERLKPI…KEGVFLSCRT (106 aa)) form the THUMP domain. ATP-binding positions include 183-184 (ML), 208-209 (HF), Arg-265, Gly-287, and Gln-296.

The protein belongs to the ThiI family.

The protein resides in the cytoplasm. The enzyme catalyses [ThiI sulfur-carrier protein]-S-sulfanyl-L-cysteine + a uridine in tRNA + 2 reduced [2Fe-2S]-[ferredoxin] + ATP + H(+) = [ThiI sulfur-carrier protein]-L-cysteine + a 4-thiouridine in tRNA + 2 oxidized [2Fe-2S]-[ferredoxin] + AMP + diphosphate. The catalysed reaction is [ThiS sulfur-carrier protein]-C-terminal Gly-Gly-AMP + S-sulfanyl-L-cysteinyl-[cysteine desulfurase] + AH2 = [ThiS sulfur-carrier protein]-C-terminal-Gly-aminoethanethioate + L-cysteinyl-[cysteine desulfurase] + A + AMP + 2 H(+). The protein operates within cofactor biosynthesis; thiamine diphosphate biosynthesis. Catalyzes the ATP-dependent transfer of a sulfur to tRNA to produce 4-thiouridine in position 8 of tRNAs, which functions as a near-UV photosensor. Also catalyzes the transfer of sulfur to the sulfur carrier protein ThiS, forming ThiS-thiocarboxylate. This is a step in the synthesis of thiazole, in the thiamine biosynthesis pathway. The sulfur is donated as persulfide by IscS. The polypeptide is Probable tRNA sulfurtransferase (Listeria monocytogenes serotype 4a (strain HCC23)).